The sequence spans 729 residues: 1,4-alpha-glucan branching enzyme GlgB (729 aa).

Asp-408 acts as the Nucleophile in catalysis. Glu-461 serves as the catalytic Proton donor.

The protein belongs to the glycosyl hydrolase 13 family. GlgB subfamily. In terms of assembly, monomer.

The enzyme catalyses Transfers a segment of a (1-&gt;4)-alpha-D-glucan chain to a primary hydroxy group in a similar glucan chain.. It functions in the pathway glycan biosynthesis; glycogen biosynthesis. Functionally, catalyzes the formation of the alpha-1,6-glucosidic linkages in glycogen by scission of a 1,4-alpha-linked oligosaccharide from growing alpha-1,4-glucan chains and the subsequent attachment of the oligosaccharide to the alpha-1,6 position. The chain is 1,4-alpha-glucan branching enzyme GlgB from Vibrio cholerae serotype O1 (strain ATCC 39315 / El Tor Inaba N16961).